The sequence spans 308 residues: Glutaminase (308 aa).

Ser-66, Asn-117, Glu-161, Asn-168, Tyr-192, Tyr-244, and Val-262 together coordinate substrate.

Belongs to the glutaminase family. Homotetramer.

The catalysed reaction is L-glutamine + H2O = L-glutamate + NH4(+). This chain is Glutaminase, found in Klebsiella pneumoniae (strain 342).